We begin with the raw amino-acid sequence, 299 residues long: Troponin T, cardiac muscle (299 aa).

The span at 1 to 71 shows a compositional bias: acidic residues; it reads MSDAEEEVVE…EARDAEDGPV (71 aa). Disordered regions lie at residues 1 to 97 and 137 to 220; these read MSDA…GERV and DRIE…EKKK. Ser-2 carries the N-acetylserine modification. At Ser-2 the chain carries Phosphoserine. 2 stretches are compositionally biased toward basic and acidic residues: residues 137–185 and 204–220; these read DRIE…DEAR and QTER…EKKK. Position 205 is a phosphothreonine; by PKC/PRKCA (Thr-205). At Ser-209 the chain carries Phosphoserine; by PKC/PRKCA. Thr-214 carries the post-translational modification Phosphothreonine; by PKC/PRKCA and RAF1. A Phosphothreonine; by PKC/PRKCA modification is found at Thr-295.

It belongs to the troponin T family. Phosphorylation at Thr-214 by PRKCA induces significant reduction in myofilament calcium sensitivity and actomyosin ATPase activity.

Troponin T is the tropomyosin-binding subunit of troponin, the thin filament regulatory complex which confers calcium-sensitivity to striated muscle actomyosin ATPase activity. The sequence is that of Troponin T, cardiac muscle (Tnnt2) from Rattus norvegicus (Rat).